Reading from the N-terminus, the 1059-residue chain is Potassium transporter TRK1 (1059 aa).

Residues 1–46 (MLYRVSGFYKRHTRNFTNIDYGYYIRNFIHHIASKIYPYAKVVLPN) lie on the Cytoplasmic side of the membrane. Residues 47 to 67 (FRAAHYFYILTLVILGSILVY) form a helical membrane-spanning segment. Topologically, residues 68 to 73 (PVKTCA) are extracellular. An intramembrane segment occupies 74 to 90 (YIDVLFFTAGASTQAGL). Residues 91–99 (NTVNVNDLS) are Extracellular-facing. Residues 100 to 122 (LYQQIVLYLLATLATPIFIHGSL) form a helical membrane-spanning segment. At 123-625 (LFVRLYYFER…LGGIEYRAVK (503 aa)) the chain is on the cytoplasmic side. 3 disordered regions span residues 180 to 276 (REAE…IDPE), 304 to 350 (IGSP…EDED), and 404 to 574 (PWTS…SIEN). A compositionally biased stretch (low complexity) spans 186–203 (SSSSPQSSSSQTSQPVST). The span at 236–245 (EKIHFEEPQR) shows a compositional bias: basic and acidic residues. Residues 335–344 (PATNSVGTGN) are compositionally biased toward polar residues. The span at 412 to 423 (TLSNSSKKGSLS) shows a compositional bias: low complexity. 2 stretches are compositionally biased toward acidic residues: residues 428 to 449 (DTEDDSEDEEYASIDSETSDIS) and 469 to 490 (YEEDEDEDEHNSDDDDDDDDGE). The span at 524–536 (RSNTLDTPQQNTS) shows a compositional bias: polar residues. Residues 540–552 (KIRKKAPKRKTPR) are compositionally biased toward basic residues. Positions 556–566 (NASFNQHSNVS) are enriched in polar residues. A helical transmembrane segment spans residues 626–649 (LLIKIIVVYYVGFNIIPGVMLSIW). At 650-668 (IYCMPHYKNLMISSSISPA) the chain is on the extracellular side. Residues 669-685 (WWAFFTSQSSFNDLGLT) lie within the membrane without spanning it. The Extracellular portion of the chain corresponds to 686-696 (LTSNSMMSFNQ). The chain crosses the membrane as a helical span at residues 697–713 (NAFVQILCSFLIVIGNT). The Cytoplasmic segment spans residues 714 to 757 (GFPILLRFIIWVMFKTARPLSLYKESLGFLLDHPRRCFTLLFPS). The chain crosses the membrane as a helical span at residues 758–781 (VPTWWLFFILVVLNGFDLVIFCIL). Over 782-796 (DLHDDTFKGVDMGYR) the chain is Extracellular. An intramembrane segment occupies 797–813 (VLNGLFQAFCTRTVGFS). Residues 814–820 (VMDLSQL) lie on the Extracellular side of the membrane. Residues 821-844 (HAATQVSYLIMMYISVLPIAISVR) form a helical membrane-spanning segment. The Cytoplasmic segment spans residues 845-877 (RTNVYEEQSLGVYAKENAEGVDESAPSNYVGSH). The helical transmembrane segment at 878-899 (LRNQLSYDLWYICLGLFIICIA) threads the bilayer. At 900–912 (EGKRLKEQDLRFS) the chain is on the extracellular side. An intramembrane segment occupies 913-931 (IFAVLFEIVSAYGTVGMSM). Over 932-945 (GYPGVDCSLSGEFN) the chain is Extracellular. A helical transmembrane segment spans residues 946 to 968 (VISKLVIIAMMIRGRHRGLPYTI). Residues 969–1059 (DRAIMLPNAA…RYVVRTVSEV (91 aa)) are Cytoplasmic-facing.

This sequence belongs to the TrkH potassium transport family.

It is found in the cell membrane. The catalysed reaction is K(+)(in) = K(+)(out). It carries out the reaction chloride(in) = chloride(out). TRK1-mediated chloride conductance is blocked by 4,4'-diisothiocyanatostilbene-2,2'-disulfonic acid. In terms of biological role, potassium transporter that mediates K(+) influx, as well as Cl(-) efflux as a secondary function. TRK1 is the major K(+) uptake transporter that regulates membrane potential and intracellular pH. The TRK1-mediated Cl(-) efflux should serve as a Cl(-) detoxification route and may play a role in sustaining C.albicans on mammalian epithelial surfaces, or in physiological saline solutions such as saliva. Its function is as follows. Mediates candidacidal activities of cysteine-free peptides, but not of defensins. The hallmark of salivary gland-secreted histatin-5 (Hst 5) killing of C.albicans is the rapid efflux of cellular ATP and other small nucleotides and ions from the cell as well as concurrent intracellular uptake of propidium iodide (PI). TRK1 is the channel for Hst 5-induced killing and histatin-5 may directly or indirectly alter TRK1 function, allowing the efflux of larger anions, including ATP, and the influx of small cationic dyes, such as PI. The sequence is that of Potassium transporter TRK1 from Candida albicans (Yeast).